Consider the following 314-residue polypeptide: Olfactory receptor 1E1 (314 aa).

The Extracellular segment spans residues 1–25 (MMGQNQTSISDFLLLGLPIQPEQQN). N-linked (GlcNAc...) asparagine glycosylation is present at Asn-5. A helical transmembrane segment spans residues 26-49 (LCYALFLAMYLTTLLGNLLIIVLI). Residues 50–57 (RLDSHLHT) lie on the Cytoplasmic side of the membrane. The helical transmembrane segment at 58 to 79 (PMYLFLSNLSFSDLCFSSVTIP) threads the bilayer. Residues 80-100 (KLLQNMQNQDPSIPYADCLTQ) are Extracellular-facing. Cys-97 and Cys-189 are oxidised to a cystine. The chain crosses the membrane as a helical span at residues 101 to 120 (MYFFLLFGDLESFLLVAMAY). Over 121 to 139 (DRYVAICFALHYTAIMSPM) the chain is Cytoplasmic. Residues 140 to 158 (LCLSLVALSWVLTTFHAML) traverse the membrane as a helical segment. Topologically, residues 159 to 195 (HTLLMARLCFCADNVIPHFFCDMSALLKLACSDTRVN) are extracellular. Residues 196–219 (EWVIFIMGGLIVVIPFLLILGSYA) form a helical membrane-spanning segment. At 220–236 (RIVSSILKVPSSKGICK) the chain is on the cytoplasmic side. A helical membrane pass occupies residues 237 to 259 (AFSTCGSHLSVVSLFYGTVIGLY). Topologically, residues 260–272 (LCPSANSSTLKET) are extracellular. A helical transmembrane segment spans residues 273–292 (VMAMMYTVVTPMLNPFIYSL). Residues 293–314 (RNGDMKGALSRVIHQKKTFFSL) are Cytoplasmic-facing.

It belongs to the G-protein coupled receptor 1 family.

The protein resides in the cell membrane. In terms of biological role, odorant receptor. This Gorilla gorilla gorilla (Western lowland gorilla) protein is Olfactory receptor 1E1 (OR1E1).